The chain runs to 363 residues: Peptide chain release factor 1 (363 aa).

At Q237 the chain carries N5-methylglutamine. Basic and acidic residues predominate over residues 286-295 (EKRRSAEATT). Residues 286–305 (EKRRSAEATTRRNLVGSGDR) form a disordered region.

It belongs to the prokaryotic/mitochondrial release factor family. Methylated by PrmC. Methylation increases the termination efficiency of RF1.

The protein localises to the cytoplasm. Functionally, peptide chain release factor 1 directs the termination of translation in response to the peptide chain termination codons UAG and UAA. This Shewanella amazonensis (strain ATCC BAA-1098 / SB2B) protein is Peptide chain release factor 1.